The primary structure comprises 1025 residues: Multidrug resistance protein MdtC (1025 aa).

The next 12 membrane-spanning stretches (helical) occupy residues 3–23 (FFAL…AITL), 333–353 (EVEQ…FLFL), 360–380 (IIPA…MYLC), 387–407 (LSLM…IVVL), 431–451 (VGFT…PLLL), 463–483 (FAVT…TLTP), 528–548 (LVGV…ISIP), 853–873 (VILI…LYES), 875–895 (VHPL…LLAL), 897–917 (LFNA…IGIV), 953–973 (PIMM…LSGG), and 984–1004 (ITIV…TPVV).

The protein belongs to the resistance-nodulation-cell division (RND) (TC 2.A.6) family. MdtC subfamily. Part of a tripartite efflux system composed of MdtA, MdtB and MdtC. MdtC forms a heteromultimer with MdtB.

It localises to the cell inner membrane. Its function is as follows. The MdtABC tripartite complex confers resistance against novobiocin and deoxycholate. In Escherichia coli O1:K1 / APEC, this protein is Multidrug resistance protein MdtC.